The sequence spans 280 residues: Putative transcription factor kapC (280 aa).

The tract at residues 1–102 (MQPALAPHPS…GKRPLSTSKR (102 aa)) is disordered. A compositionally biased stretch (pro residues) spans 39–49 (PQPPAPQPPHM). The span at 79–89 (TQPDVTGQETP) shows a compositional bias: polar residues. Residues 96-159 (PLSTSKRAAQ…EYIINLQSRL (64 aa)) enclose the bZIP domain. The tract at residues 97–120 (LSTSKRAAQNRAAQRAFRQRKEAH) is basic motif. The interval 124–155 (LEGKVKAYENMGEAIKALQAENYQLREYIINL) is leucine-zipper. Residues 169–280 (LPGNIDLSQP…EQTHGLPLIS (112 aa)) are disordered. Pro residues predominate over residues 197-211 (APPPTAPQQPQPPHA).

Belongs to the bZIP family.

Its subcellular location is the nucleus. Its function is as follows. Putative transcription factor. This chain is Putative transcription factor kapC (kapC), found in Neosartorya fischeri (strain ATCC 1020 / DSM 3700 / CBS 544.65 / FGSC A1164 / JCM 1740 / NRRL 181 / WB 181) (Aspergillus fischerianus).